Here is a 126-residue protein sequence, read N- to C-terminus: UPF0102 protein DNO_0639 (126 aa).

Belongs to the UPF0102 family.

The chain is UPF0102 protein DNO_0639 from Dichelobacter nodosus (strain VCS1703A).